The chain runs to 103 residues: uncharacterized protein (103 aa).

This is an uncharacterized protein from Acanthamoeba polyphaga (Amoeba).